Reading from the N-terminus, the 490-residue chain is Aspartyl/glutamyl-tRNA(Asn/Gln) amidotransferase subunit B (490 aa).

It belongs to the GatB/GatE family. GatB subfamily. In terms of assembly, heterotrimer of A, B and C subunits.

It catalyses the reaction L-glutamyl-tRNA(Gln) + L-glutamine + ATP + H2O = L-glutaminyl-tRNA(Gln) + L-glutamate + ADP + phosphate + H(+). The catalysed reaction is L-aspartyl-tRNA(Asn) + L-glutamine + ATP + H2O = L-asparaginyl-tRNA(Asn) + L-glutamate + ADP + phosphate + 2 H(+). In terms of biological role, allows the formation of correctly charged Asn-tRNA(Asn) or Gln-tRNA(Gln) through the transamidation of misacylated Asp-tRNA(Asn) or Glu-tRNA(Gln) in organisms which lack either or both of asparaginyl-tRNA or glutaminyl-tRNA synthetases. The reaction takes place in the presence of glutamine and ATP through an activated phospho-Asp-tRNA(Asn) or phospho-Glu-tRNA(Gln). The protein is Aspartyl/glutamyl-tRNA(Asn/Gln) amidotransferase subunit B of Prochlorococcus marinus (strain MIT 9515).